Reading from the N-terminus, the 387-residue chain is Diels-Alderase ORF3 (387 aa).

This sequence belongs to the Diels-Alderase family.

It functions in the pathway secondary metabolite biosynthesis. Functionally, diels-Alderase; part of the gene cluster that mediates the biosynthesis of a tyrosine-derived cytochalasan acting as a fungal signal recognized by resistant rice plants and leads to avirulence in Pi33 resistant rice cultivars. The first step in the pathway is catalyzed by the hybrid PKS-NRPS ACE1, assisted by the enoyl reductase RAP1, that are responsible for fusion of the tyrosine precursor and the polyketide backbone. The polyketide synthase module (PKS) of ACE1 is responsible for the synthesis of the polyketide backbone and the downstream nonribosomal peptide synthetase (NRPS) amidates the carboxyl end of the polyketide with the tyrosine precursor. Because ACE1 lacks a designated enoylreductase (ER) domain, the required activity is provided the enoyl reductase RAP1. Reduction by the hydrolyase ORFZ, followed by dehydration and intra-molecular Diels-Alder cyclization by the Diels-Alderase ORF3 then yield the required isoindolone-fused macrocycle. A number of oxidative steps catalyzed by the tailoring enzymes identified within the cluster, including cytochrome P450 monooxygenases CYP1 to CYP4, the FAD-linked oxidoreductase OXR2 and the short-chain dehydrogenase/reductase OXR1, are further required to afford the final cytochalasans that confer avirulence and which have still to be identified. The monooxygenase CYP1 has been shown to be a site-selective C-18 hydroxylase whereas the function of CYP3 is the site-selective epoxidation of the C-6/C-7 olefin that is present in some intermediate compounds. Finally, SYN2 and RAP2 are not required for avirulence in Pi33 resistant rice cultivars. This chain is Diels-Alderase ORF3, found in Pyricularia oryzae (strain 70-15 / ATCC MYA-4617 / FGSC 8958) (Rice blast fungus).